The primary structure comprises 388 residues: Glucose-6-phosphate/phosphate translocator 1, chloroplastic (388 aa).

The N-terminal 65 residues, 1–65, are a transit peptide targeting the chloroplast; sequence MVLSVKQTLS…LRAKSPVVRC (65 aa). 8 consecutive transmembrane segments (helical) span residues 95-115, 129-149, 158-178, 211-231, 233-253, 273-293, 305-325, and 363-383; these read LKIG…NIYN, STLS…VGIV, FWKT…AATV, FPTS…LSAL, ELNF…AFVF, YACL…AVEG, LATV…FYHL, and TPVQ…TFLY. Residues 112–229 form the EamA domain; sequence NIYNKKVLNA…IPIIGGCALS (118 aa).

Belongs to the TPT transporter family. GPT (TC 2.A.7.9) subfamily. Expressed in seeds, flowers, rosette leaves, and roots, with highest levels found in stamens. Found in the root cap, in guard cells and in mesophyll cells.

It is found in the plastid. The protein localises to the chloroplast membrane. It localises to the endoplasmic reticulum membrane. Its subcellular location is the peroxisome membrane. Functionally, glucose 6-phosphate (Glc6P) transporter. Also transports inorganic phosphate, 3-phosphoglycerate, triose phosphates and, to a leser extent, phosphoenolpyruvate. Responsible for the transport of Glc6P into plastids of heterotrophic tissues where it can be used as a carbon source for starch biosynthesis, as substrate for fatty acid biosynthesis or as substrate for NADPH generation via the oxidative pentose phosphate pathway (OPPP). Required for pollen maturation and embryo sac development. Preferentially exchanges Glc6P for ribulose-5-phosphate (Ru5P) in reconstituted yeast proteoliposomes. May supply the substrate (Glc6P) for OPPP reactions inside peroxisomes and exchange it with the product Ru5P which leaves the organelle. The chain is Glucose-6-phosphate/phosphate translocator 1, chloroplastic from Arabidopsis thaliana (Mouse-ear cress).